Consider the following 186-residue polypeptide: Large ribosomal subunit protein uL10 (186 aa).

The protein belongs to the universal ribosomal protein uL10 family. In terms of assembly, part of the ribosomal stalk of the 50S ribosomal subunit. The N-terminus interacts with L11 and the large rRNA to form the base of the stalk. The C-terminus forms an elongated spine to which L12 dimers bind in a sequential fashion forming a multimeric L10(L12)X complex.

Functionally, forms part of the ribosomal stalk, playing a central role in the interaction of the ribosome with GTP-bound translation factors. The sequence is that of Large ribosomal subunit protein uL10 from Rhodococcus jostii (strain RHA1).